A 702-amino-acid chain; its full sequence is Exodeoxyribonuclease 1 (702 aa).

The segment at M1–R96 is N-domain. Residues D30, D78, E150, D152, D171, D173, and D227 each coordinate Mg(2+). The segment at N114–F247 is I-domain. Residue S372 is modified to Phosphoserine. 2 disordered regions span residues S465 to S571 and S660 to R685. Polar residues predominate over residues N474–T498. 2 stretches are compositionally biased toward acidic residues: residues L500–E518 and N535–E550. Over residues T558–S571 the composition is skewed to low complexity. Positions L667–T678 are enriched in basic and acidic residues.

This sequence belongs to the XPG/RAD2 endonuclease family. EXO1 subfamily. Interacts with mismatch repair protein MSH2. It depends on Mg(2+) as a cofactor.

The protein localises to the nucleus. With respect to regulation, inactivated by calcium and zinc ions. 5'-&gt;3' double-stranded DNA exonuclease involved in mismatch repair and eventually also in mitotic recombination between direct repeats. Also has a minor role in the correction of large DNA mismatches that occur in the heteroduplex DNA during meiotic recombination at the HIS4 locus. The protein is Exodeoxyribonuclease 1 (EXO1) of Saccharomyces cerevisiae (strain ATCC 204508 / S288c) (Baker's yeast).